The following is a 206-amino-acid chain: FMN-dependent NADH:quinone oxidoreductase 1 (206 aa).

Residues S10 and 16 to 18 (SLS) each bind FMN.

It belongs to the azoreductase type 1 family. As to quaternary structure, homodimer. FMN serves as cofactor.

The enzyme catalyses 2 a quinone + NADH + H(+) = 2 a 1,4-benzosemiquinone + NAD(+). The catalysed reaction is N,N-dimethyl-1,4-phenylenediamine + anthranilate + 2 NAD(+) = 2-(4-dimethylaminophenyl)diazenylbenzoate + 2 NADH + 2 H(+). Its function is as follows. Quinone reductase that provides resistance to thiol-specific stress caused by electrophilic quinones. Functionally, also exhibits azoreductase activity. Catalyzes the reductive cleavage of the azo bond in aromatic azo compounds to the corresponding amines. In Burkholderia lata (strain ATCC 17760 / DSM 23089 / LMG 22485 / NCIMB 9086 / R18194 / 383), this protein is FMN-dependent NADH:quinone oxidoreductase 1.